The following is a 383-amino-acid chain: 8-amino-7-oxononanoate synthase (383 aa).

Residue Arg23 participates in substrate binding. Position 110 to 111 (110 to 111) interacts with pyridoxal 5'-phosphate; sequence GF. Position 135 (His135) interacts with substrate. The pyridoxal 5'-phosphate site is built by Ser181, His209, and Thr235. At Lys238 the chain carries N6-(pyridoxal phosphate)lysine. Thr351 provides a ligand contact to substrate.

This sequence belongs to the class-II pyridoxal-phosphate-dependent aminotransferase family. BioF subfamily. Homodimer. Pyridoxal 5'-phosphate serves as cofactor.

The enzyme catalyses 6-carboxyhexanoyl-[ACP] + L-alanine + H(+) = (8S)-8-amino-7-oxononanoate + holo-[ACP] + CO2. It functions in the pathway cofactor biosynthesis; biotin biosynthesis. In terms of biological role, catalyzes the decarboxylative condensation of pimeloyl-[acyl-carrier protein] and L-alanine to produce 8-amino-7-oxononanoate (AON), [acyl-carrier protein], and carbon dioxide. The sequence is that of 8-amino-7-oxononanoate synthase from Aliivibrio fischeri (strain MJ11) (Vibrio fischeri).